Here is a 343-residue protein sequence, read N- to C-terminus: Methionine synthase (343 aa).

Zn(2+) contacts are provided by H211, C213, E236, and C315.

This sequence belongs to the archaeal MetE family. Zn(2+) serves as cofactor.

It functions in the pathway amino-acid biosynthesis; L-methionine biosynthesis via de novo pathway. Catalyzes the transfer of a methyl group to L-homocysteine resulting in methionine formation. The physiological methyl donor is unknown. This Thermoplasma acidophilum (strain ATCC 25905 / DSM 1728 / JCM 9062 / NBRC 15155 / AMRC-C165) protein is Methionine synthase.